The primary structure comprises 67 residues: uncharacterized protein (67 aa).

This is an uncharacterized protein from Vaccinia virus (strain Copenhagen) (VACV).